Reading from the N-terminus, the 478-residue chain is Ribulose bisphosphate carboxylase large chain (478 aa).

The propeptide occupies methionine 1–serine 2. Proline 3 is subject to N-acetylproline. Lysine 14 carries the post-translational modification N6,N6,N6-trimethyllysine. Positions 123 and 173 each coordinate substrate. Lysine 175 acts as the Proton acceptor in catalysis. Position 177 (lysine 177) interacts with substrate. Residues lysine 201, aspartate 203, and glutamate 204 each contribute to the Mg(2+) site. An N6-carboxylysine modification is found at lysine 201. Residue histidine 294 is the Proton acceptor of the active site. Substrate is bound by residues arginine 295, histidine 327, and serine 379.

It belongs to the RuBisCO large chain family. Type I subfamily. In terms of assembly, heterohexadecamer of 8 large chains and 8 small chains; disulfide-linked. The disulfide link is formed within the large subunit homodimers. It depends on Mg(2+) as a cofactor. In terms of processing, the disulfide bond which can form in the large chain dimeric partners within the hexadecamer appears to be associated with oxidative stress and protein turnover.

The protein localises to the plastid. The protein resides in the chloroplast. It catalyses the reaction 2 (2R)-3-phosphoglycerate + 2 H(+) = D-ribulose 1,5-bisphosphate + CO2 + H2O. The catalysed reaction is D-ribulose 1,5-bisphosphate + O2 = 2-phosphoglycolate + (2R)-3-phosphoglycerate + 2 H(+). Functionally, ruBisCO catalyzes two reactions: the carboxylation of D-ribulose 1,5-bisphosphate, the primary event in carbon dioxide fixation, as well as the oxidative fragmentation of the pentose substrate in the photorespiration process. Both reactions occur simultaneously and in competition at the same active site. This is Ribulose bisphosphate carboxylase large chain from Drimys granadensis.